A 119-amino-acid polypeptide reads, in one-letter code: Large ribosomal subunit protein bL17 (119 aa).

The protein belongs to the bacterial ribosomal protein bL17 family. Part of the 50S ribosomal subunit. Contacts protein L32.

The chain is Large ribosomal subunit protein bL17 from Mycoplasma mycoides subsp. mycoides SC (strain CCUG 32753 / NCTC 10114 / PG1).